A 572-amino-acid polypeptide reads, in one-letter code: Putative two-component response regulator ARR13 (572 aa).

The 118-residue stretch at 17-134 (NVMVVDDNRV…DLPKIYQFAL (118 aa)) folds into the Response regulatory domain. D71 carries the post-translational modification 4-aspartylphosphate. Positions 175–225 (KKNCSSKSDTRTVNSTNVSHVSTNGSRKNRKRKPKGGPSDDGESLSQPPKK) are disordered. Residues 179-197 (SSKSDTRTVNSTNVSHVST) show a composition bias toward polar residues. Positions 224-227 (KKKK) match the Nuclear localization signal motif. The myb-like GARP DNA-binding region spans 227-277 (KIWWTNPLQDLFLQAIQHIGYDKVVPKKILAIMNVPYLTRENVASHLQKYR). Positions 509 to 522 (NQDQSNGESSNTIA) are enriched in polar residues. A disordered region spans residues 509 to 531 (NQDQSNGESSNTIATPETNTPNF).

It belongs to the ARR family. Type-B subfamily. Binds the target DNA as a monomer. Post-translationally, two-component system major event consists of a His-to-Asp phosphorelay between a sensor histidine kinase (HK) and a response regulator (RR). In plants, the His-to-Asp phosphorelay involves an additional intermediate named Histidine-containing phosphotransfer protein (HPt). This multistep phosphorelay consists of a His-Asp-His-Asp sequential transfer of a phosphate group between first a His and an Asp of the HK protein, followed by the transfer to a conserved His of the HPt protein and finally the transfer to an Asp in the receiver domain of the RR protein.

The protein resides in the nucleus. In terms of biological role, putative transcriptional activator that binds specifically to the DNA sequence 5'-[AG]GATT-3'. Functions as a response regulator involved in His-to-Asp phosphorelay signal transduction system. Phosphorylation of the Asp residue in the receiver domain activates the ability of the protein to promote the transcription of target genes. Could directly activate some type-A response regulators in response to cytokinins. The sequence is that of Putative two-component response regulator ARR13 (ARR13) from Arabidopsis thaliana (Mouse-ear cress).